The following is a 585-amino-acid chain: Pentatricopeptide repeat-containing protein At4g21170 (585 aa).

PPR repeat units lie at residues 152–186 (LSVS…RLSP), 187–221 (SQSA…GIVS), 222–247 (DELT…KLME), 252–286 (SCKI…KLEL), 287–321 (SFCS…KFVT), 324–358 (DSAV…ETVR), 360–394 (WDST…GITV), 396–431 (DESC…GFVP), 432–466 (CTHK…EVYF), 467–501 (DSFA…KGSL), 502–534 (DVNA…MKEI), and 538–572 (NSKS…GLKP).

The protein belongs to the PPR family. P subfamily.

This chain is Pentatricopeptide repeat-containing protein At4g21170, found in Arabidopsis thaliana (Mouse-ear cress).